A 545-amino-acid chain; its full sequence is Cytochrome P450 10 (545 aa).

Cys493 contributes to the heme binding site.

Belongs to the cytochrome P450 family. Requires heme as cofactor. As to expression, abundantly expressed in the female gonadotropic hormone producing dorsal bodies.

May be involved in the synthesis of the female gonadotropic hormone produced by the dorsal bodies. This is Cytochrome P450 10 (CYP10) from Lymnaea stagnalis (Great pond snail).